Reading from the N-terminus, the 552-residue chain is CTP synthase (552 aa).

Residues 1–270 form an amidoligase domain region; that stretch reads MTKYVFVTGG…DRIICDELKL (270 aa). Ser-13 is a binding site for CTP. Ser-13 is a binding site for UTP. Residues 14-19 and Asp-71 contribute to the ATP site; that span reads SLGKGI. Positions 71 and 144 each coordinate Mg(2+). Residues 151-153, 191-196, and Lys-227 contribute to the CTP site; these read DIE and KTKPTQ. UTP contacts are provided by residues 191–196 and Lys-227; that span reads KTKPTQ. The region spanning 295-547 is the Glutamine amidotransferase type-1 domain; that stretch reads TIGMVGKYVD…VEAALANKQA (253 aa). Gly-356 provides a ligand contact to L-glutamine. Catalysis depends on Cys-383, which acts as the Nucleophile; for glutamine hydrolysis. L-glutamine-binding positions include 384–387, Glu-407, and Arg-473; that span reads LGMQ. Active-site residues include His-520 and Glu-522.

The protein belongs to the CTP synthase family. In terms of assembly, homotetramer.

It carries out the reaction UTP + L-glutamine + ATP + H2O = CTP + L-glutamate + ADP + phosphate + 2 H(+). The enzyme catalyses L-glutamine + H2O = L-glutamate + NH4(+). The catalysed reaction is UTP + NH4(+) + ATP = CTP + ADP + phosphate + 2 H(+). It functions in the pathway pyrimidine metabolism; CTP biosynthesis via de novo pathway; CTP from UDP: step 2/2. With respect to regulation, allosterically activated by GTP, when glutamine is the substrate; GTP has no effect on the reaction when ammonia is the substrate. The allosteric effector GTP functions by stabilizing the protein conformation that binds the tetrahedral intermediate(s) formed during glutamine hydrolysis. Inhibited by the product CTP, via allosteric rather than competitive inhibition. Catalyzes the ATP-dependent amination of UTP to CTP with either L-glutamine or ammonia as the source of nitrogen. Regulates intracellular CTP levels through interactions with the four ribonucleotide triphosphates. This is CTP synthase from Burkholderia vietnamiensis (strain G4 / LMG 22486) (Burkholderia cepacia (strain R1808)).